The primary structure comprises 371 residues: Cuticle collagen 71 (371 aa).

A helical transmembrane segment spans residues G38–F60. Disordered stretches follow at residues A108–A127 and E153–R371. A compositionally biased stretch (pro residues) spans P174–P186. Over residues P188–P201 the composition is skewed to low complexity. Residues G202–A222 are compositionally biased toward pro residues. Positions G223–P240 are enriched in low complexity. A Collagen-like domain is found at G223–A280. Residues N246–R260 show a composition bias toward basic and acidic residues. The segment covering A314 to N323 has biased composition (low complexity). The span at H340–E349 shows a compositional bias: basic and acidic residues.

The protein belongs to the cuticular collagen family. As to quaternary structure, collagen polypeptide chains are complexed within the cuticle by disulfide bonds and other types of covalent cross-links.

It is found in the membrane. It localises to the nucleus. Functionally, probable cuticular collagen-like protein. Nematode cuticles are composed largely of collagen-like proteins. The cuticle functions both as an exoskeleton and as a barrier to protect the worm from its environment. Acts downstream of the Wnt signaling pathway, perhaps in the formation of the adult cuticle. The sequence is that of Cuticle collagen 71 from Caenorhabditis elegans.